The chain runs to 91 residues: Uteroglobin (91 aa).

A signal peptide spans 1-21; that stretch reads MKLTITLALVTLALLCSPASA.

This sequence belongs to the secretoglobin family. Antiparallel homodimer; disulfide-linked. Interaction with LMBR1L is controversial.

The protein localises to the secreted. Its function is as follows. Uteroglobin binds progesterone specifically and with high affinity. It may regulate progesterone concentrations reaching the blastocyst. It is also a potent inhibitor of phospholipase A2. The protein is Uteroglobin (SCGB1A1) of Lepus capensis (Brown hare).